The following is a 140-amino-acid chain: MPGLFSANNLIKSRKAKRLADTAYRKRALGTKYKHSVLGRAPQAKAIVLEKIGVEAKQPNSAIRKAVRCQLIATGKKITAFVPYDGSVTYIESNDEVTVEGFGKKGRSVGDIPGIRFKVCKVQNVSLHAIFTGKKEKPSR.

Residue proline 59 is modified to Hydroxyproline.

Belongs to the universal ribosomal protein uS12 family.

This chain is Small ribosomal subunit protein uS12 (RPS23), found in Encephalitozoon cuniculi (strain GB-M1) (Microsporidian parasite).